The following is a 219-amino-acid chain: HTH-type transcriptional regulator LutR (219 aa).

Residues 1–56 (MIKNGELKPGDKLDSVQALAESFQVSRSAVREALSALKAMGLVEMKQGEGTYLKEF) form the HTH gntR-type domain. The segment at residues 16–35 (VQALAESFQVSRSAVREALS) is a DNA-binding region (H-T-H motif).

In terms of biological role, negatively regulates the transcription of the lutABC operon, which is required for L-lactate utilization. LutR activity is regulated by lactate, since presence of L-lactate, that probably binds to LutR, leads to derepression of the operon. Also appears to be essential for bacilysin biosynthesis. This chain is HTH-type transcriptional regulator LutR (lutR), found in Bacillus subtilis (strain 168).